Reading from the N-terminus, the 380-residue chain is M-protease (380 aa).

An N-terminal signal peptide occupies residues 1 to 27 (MKKPLGKIVASTALLISVAFSSSIASA). The propeptide occupies 28–111 (AEEAKEKYLI…IEEDAEVTTM (84 aa)). Positions 34-111 (KYLIGFNEQE…IEEDAEVTTM (78 aa)) constitute an Inhibitor I9 domain. Gln113 lines the Ca(2+) pocket. One can recognise a Peptidase S8 domain in the interval 116-379 (PWGISRVQAP…SGLVNAEAAT (264 aa)). The active-site Charge relay system is the Asp143. Asp151 is a binding site for Ca(2+). The Charge relay system role is filled by His173. Leu184, Asn186, Ile188, Val190, Ala274, Tyr276, Ala279, and Asp302 together coordinate Ca(2+). The active-site Charge relay system is the Ser326.

It belongs to the peptidase S8 family. As to quaternary structure, monomer. Ca(2+) serves as cofactor.

It is found in the secreted. With respect to regulation, activity is inhibited by phenylmethylsulfonyl fluoride and chymostatin. Its function is as follows. Alkaline serine protease that cleaves various substrates, including N-succinyl-Ala-Ala-Pro-Phe-pNA, N-succinyl-Ala-Ala-Pro-MetpNA, oxidized insulin B chain, casein, hemoglobin and scleroproteins, such as keratin, alpha-keratin and elastin. The polypeptide is M-protease (aprE) (Shouchella clausii (strain KSM-K16) (Alkalihalobacillus clausii)).